Reading from the N-terminus, the 362-residue chain is sn-glycerol-3-phosphate import ATP-binding protein UgpC (362 aa).

The region spanning 4-235 is the ABC transporter domain; it reads LKLQAVTKSY…PATLFVASFI (232 aa). 37–44 provides a ligand contact to ATP; that stretch reads GPSGCGKS.

The protein belongs to the ABC transporter superfamily. sn-glycerol-3-phosphate importer (TC 3.A.1.1.3) family. In terms of assembly, the complex is composed of two ATP-binding proteins (UgpC), two transmembrane proteins (UgpA and UgpE) and a solute-binding protein (UgpB).

It localises to the cell inner membrane. It catalyses the reaction sn-glycerol 3-phosphate(out) + ATP + H2O = sn-glycerol 3-phosphate(in) + ADP + phosphate + H(+). Its function is as follows. Part of the ABC transporter complex UgpBAEC involved in sn-glycerol-3-phosphate (G3P) import. Responsible for energy coupling to the transport system. This chain is sn-glycerol-3-phosphate import ATP-binding protein UgpC, found in Yersinia enterocolitica serotype O:8 / biotype 1B (strain NCTC 13174 / 8081).